A 1572-amino-acid chain; its full sequence is MASEQDGFLPAATRGDSNWSGVSGWESALSAMRAEVPSIDSDDSSLSDCEEEELHIFQREDTNLIPDLSIELLDDGELNSEVVTRQMSLEKVEFSDSLEPSPNVCVPLSVQKAELDDTINSRNPETEQLCPEPIDNIQTESMVGIKDSEKEDGFRHVLHSSVTTVLKPQINSNVDSEYEIHPGNTEKEHLSTSALSSKPVGLSLQFLECLEQWDLNALLHQLKEEEVQEREMPPLILSMEESTERRHKLIMEKLVEFAAQQSEEVSSVPQLEEKEKEGTISKSSFRPYPDQKMYLKGSGKHPQSFSTICLDLRTTVSKMGQVTSLEQNPENPSQRNEQKEKHHLNKTDHTGKSLLLRNRHNIQNDSLSDANMSNSESLSKEKKELGTPTQRKQRPKSKVDISPKLQEMVGREEKDGREEQEKEKEILQYLPPKSLINSRADEFAQREKQEKEKKARLRMLTQLEDLKPRSSVNGRQPMAEATPILFHPETSYCPGISSLPDVARSGVETLLLTICLSSCGQVFIPGQHGARSSYPSLFLANTFHCLLTWLISLVPGVNTHGKVNAPFHVLGLQQAWQEEGLALYACLSPRQIATQSSPKIRKHKGKQDLRGTSSFYQRVSLFLSHNTLQSVIWWSEDVVERLQGKLFPLPTEVPAVRLSSIATLNSAPEAVEKVFSSACGFYWQTLETEEKINPLLSEIPTDSETEVVSVIVFERMLSNPTAFHHTLHIIQTEGLDVCGVRLLYPQANALHSYIDTVPSSYTGGDGQTLPVLALALRGTQAEHIWAEIAGPFDPQLARLTDQYSLNAMYGFKRGEPIMHWARKSGRLLQELSLWFGGRIPPSGSFNIGFQNPYSRSTQPRSANLRSRSDSEKDVTAFHDTDRCRPPALLTASILGDVFLVVSPAVPSAAYGDVIDICLHRGFALYGLRRLRLSAKRSAMLSMSSTQVSIFCPNVPHSQTDAQPCRQPRLHCFLLLLRKENAAHHTSGLIQALMNELAERGLLGAIHAKFSYICEVDPSFCFHVAPYTDNLLQSLGGSLHAMPDLSTVPMDMLSLRPFASDPEDEQVVVLTMSGKHTLRRAGYFLQKILRPTLKTPASNTGSVHDGFELLGLKWLPSLSRLQAKEITPYEVGDRPWQRSIEHLISNPALLCALRRSNAFAVLQHTIKQLAPTLGMEHPQLIASATPEIAFRQAALIFSDRDLVSDPESRSSLMYIPPTGINCRAGGTEDRRGTTESIFTYMLSGPPVLYTVLLLKPRIWSSALGKILYKVHQQKFILVGMKPVSLTTAMCSQILPEDVKKSEALCLTHCDYLTSGPCLALCLQRRGAVLKLLDVLGPEDPELCRAQDQFLWRAQYGTSAVQNGMYGSTSYQAAIRDIKTFFPEGLLFEESTVLQAEQIPKLTSDILVCSRSHRQTVKNPACGPELPTTDLPFTSALCQTTCLLFPPHMLRTSPPPYIPALEQLMAKEFHITAARLTAFDQLQAQLVAEMYSPGNYLTAKIKLLTEGPCLLVAAQRDNAVTCFPSLVHSDDRHNMSAQTLTEQVLCPQTESQANKMLSCFFDSLTPDSIHQILH.

4 disordered regions span residues 1–21 (MASE…NWSG), 262–304 (SEEV…HPQS), 324–428 (SLEQ…EILQ), and 849–871 (FQNP…SDSE). Residues 324 to 335 (SLEQNPENPSQR) are compositionally biased toward polar residues. The segment covering 336-351 (NEQKEKHHLNKTDHTG) has biased composition (basic and acidic residues). Polar residues predominate over residues 361–374 (NIQNDSLSDANMSN). The span at 409–426 (VGREEKDGREEQEKEKEI) shows a compositional bias: basic and acidic residues. Polar residues predominate over residues 849–865 (FQNPYSRSTQPRSANLR). An NDK region spans residues 1249 to 1382 (TVLLLKPRIW…IRDIKTFFPE (134 aa)).

Interacts with DNAI2. In terms of tissue distribution, expression is enriched in multiciliated cells in the epidermis and the nephrostomes of the pronephros.

It is found in the dynein axonemal particle. It localises to the cytoplasm. Functionally, in cyliated cells, dynein axonemal particle-specific protein required for deployment of ODA to the axoneme. Interacts with outer dynein arm (ODA) subunits. The protein is Dynein axonemal assembly factor 8 (dnaaf8) of Xenopus laevis (African clawed frog).